Here is a 116-residue protein sequence, read N- to C-terminus: Putative pterin-4-alpha-carbinolamine dehydratase (116 aa).

This sequence belongs to the pterin-4-alpha-carbinolamine dehydratase family.

The catalysed reaction is (4aS,6R)-4a-hydroxy-L-erythro-5,6,7,8-tetrahydrobiopterin = (6R)-L-erythro-6,7-dihydrobiopterin + H2O. The sequence is that of Putative pterin-4-alpha-carbinolamine dehydratase from Stenotrophomonas maltophilia (strain R551-3).